Consider the following 317-residue polypeptide: Probable cell division protein WhiA (317 aa).

Positions 281–314 (SLKELGQMLDPPVGKSGINHRLRRIEKIAEELRK) form a DNA-binding region, H-T-H motif.

The protein belongs to the WhiA family.

Functionally, involved in cell division and chromosome segregation. In Clostridium novyi (strain NT), this protein is Probable cell division protein WhiA.